The following is a 469-amino-acid chain: 3-isopropylmalate dehydratase large subunit (469 aa).

Residues Cys-349, Cys-409, and Cys-412 each contribute to the [4Fe-4S] cluster site.

It belongs to the aconitase/IPM isomerase family. LeuC type 1 subfamily. Heterodimer of LeuC and LeuD. [4Fe-4S] cluster serves as cofactor.

It carries out the reaction (2R,3S)-3-isopropylmalate = (2S)-2-isopropylmalate. It functions in the pathway amino-acid biosynthesis; L-leucine biosynthesis; L-leucine from 3-methyl-2-oxobutanoate: step 2/4. In terms of biological role, catalyzes the isomerization between 2-isopropylmalate and 3-isopropylmalate, via the formation of 2-isopropylmaleate. In Methylorubrum extorquens (strain CM4 / NCIMB 13688) (Methylobacterium extorquens), this protein is 3-isopropylmalate dehydratase large subunit.